The following is a 290-amino-acid chain: S-adenosylmethionine decarboxylase proenzyme (290 aa).

S138 functions as the Schiff-base intermediate with substrate; via pyruvic acid in the catalytic mechanism. S138 carries the pyruvic acid (Ser); by autocatalysis modification. The active-site Proton acceptor; for processing activity is H143. C166 (proton donor; for catalytic activity) is an active-site residue.

The protein belongs to the prokaryotic AdoMetDC family. Type 2 subfamily. As to quaternary structure, heterooctamer of four alpha and four beta chains arranged as a tetramer of alpha/beta heterodimers. Requires pyruvate as cofactor. Post-translationally, is synthesized initially as an inactive proenzyme. Formation of the active enzyme involves a self-maturation process in which the active site pyruvoyl group is generated from an internal serine residue via an autocatalytic post-translational modification. Two non-identical subunits are generated from the proenzyme in this reaction, and the pyruvate is formed at the N-terminus of the alpha chain, which is derived from the carboxyl end of the proenzyme. The post-translation cleavage follows an unusual pathway, termed non-hydrolytic serinolysis, in which the side chain hydroxyl group of the serine supplies its oxygen atom to form the C-terminus of the beta chain, while the remainder of the serine residue undergoes an oxidative deamination to produce ammonia and the pyruvoyl group blocking the N-terminus of the alpha chain.

It catalyses the reaction S-adenosyl-L-methionine + H(+) = S-adenosyl 3-(methylsulfanyl)propylamine + CO2. The protein operates within amine and polyamine biosynthesis; S-adenosylmethioninamine biosynthesis; S-adenosylmethioninamine from S-adenosyl-L-methionine: step 1/1. Functionally, catalyzes the decarboxylation of S-adenosylmethionine to S-adenosylmethioninamine (dcAdoMet), the propylamine donor required for the synthesis of the polyamines spermine and spermidine from the diamine putrescine. The chain is S-adenosylmethionine decarboxylase proenzyme from Heliobacterium modesticaldum (strain ATCC 51547 / Ice1).